The following is a 520-amino-acid chain: Peptide chain release factor 3 (520 aa).

In terms of domain architecture, tr-type G spans 8–277; it reads ESRKTFAIIS…HAPMPNARQT (270 aa). GTP-binding positions include 17-24, 85-89, and 139-142; these read SHPDAGKT, DTPGH, and NKLD.

It belongs to the TRAFAC class translation factor GTPase superfamily. Classic translation factor GTPase family. PrfC subfamily.

The protein localises to the cytoplasm. Its function is as follows. Increases the formation of ribosomal termination complexes and stimulates activities of RF-1 and RF-2. It binds guanine nucleotides and has strong preference for UGA stop codons. It may interact directly with the ribosome. The stimulation of RF-1 and RF-2 is significantly reduced by GTP and GDP, but not by GMP. The polypeptide is Peptide chain release factor 3 (Staphylococcus saprophyticus subsp. saprophyticus (strain ATCC 15305 / DSM 20229 / NCIMB 8711 / NCTC 7292 / S-41)).